A 329-amino-acid chain; its full sequence is Ketol-acid reductoisomerase (NADP(+)) (329 aa).

The 181-residue stretch at 2 to 182 (TQLFYDTDAD…GGTRAGILET (181 aa)) folds into the KARI N-terminal Rossmann domain. NADP(+)-binding positions include 25–28 (YGSQ), S51, S53, and 83–86 (DEFQ). H108 is a catalytic residue. G134 serves as a coordination point for NADP(+). Residues 183–328 (NFKEETETDL…KGLRSMFSWL (146 aa)) enclose the KARI C-terminal knotted domain. Positions 191, 195, 227, and 231 each coordinate Mg(2+). S252 provides a ligand contact to substrate.

It belongs to the ketol-acid reductoisomerase family. Requires Mg(2+) as cofactor.

The catalysed reaction is (2R)-2,3-dihydroxy-3-methylbutanoate + NADP(+) = (2S)-2-acetolactate + NADPH + H(+). It catalyses the reaction (2R,3R)-2,3-dihydroxy-3-methylpentanoate + NADP(+) = (S)-2-ethyl-2-hydroxy-3-oxobutanoate + NADPH + H(+). It participates in amino-acid biosynthesis; L-isoleucine biosynthesis; L-isoleucine from 2-oxobutanoate: step 2/4. The protein operates within amino-acid biosynthesis; L-valine biosynthesis; L-valine from pyruvate: step 2/4. In terms of biological role, involved in the biosynthesis of branched-chain amino acids (BCAA). Catalyzes an alkyl-migration followed by a ketol-acid reduction of (S)-2-acetolactate (S2AL) to yield (R)-2,3-dihydroxy-isovalerate. In the isomerase reaction, S2AL is rearranged via a Mg-dependent methyl migration to produce 3-hydroxy-3-methyl-2-ketobutyrate (HMKB). In the reductase reaction, this 2-ketoacid undergoes a metal-dependent reduction by NADPH to yield (R)-2,3-dihydroxy-isovalerate. The protein is Ketol-acid reductoisomerase (NADP(+)) of Prochlorococcus marinus (strain AS9601).